Here is a 78-residue protein sequence, read N- to C-terminus: Acyl carrier protein (78 aa).

Residues 2–77 (SDIEQRVKKI…QAIDYVNANL (76 aa)) form the Carrier domain. The residue at position 37 (S37) is an O-(pantetheine 4'-phosphoryl)serine.

It belongs to the acyl carrier protein (ACP) family. Post-translationally, 4'-phosphopantetheine is transferred from CoA to a specific serine of apo-ACP by AcpS. This modification is essential for activity because fatty acids are bound in thioester linkage to the sulfhydryl of the prosthetic group.

Its subcellular location is the cytoplasm. Its pathway is lipid metabolism; fatty acid biosynthesis. Its function is as follows. Carrier of the growing fatty acid chain in fatty acid biosynthesis. This chain is Acyl carrier protein, found in Methylobacillus flagellatus (strain ATCC 51484 / DSM 6875 / VKM B-1610 / KT).